Consider the following 189-residue polypeptide: FUN14 domain-containing protein 2 (189 aa).

Over 1 to 80 (METSAPRAGS…GQESGPSAEK (80 aa)) the chain is Cytoplasmic. Residues Ser-10 and Ser-53 each carry the phosphoserine modification. Residues 81 to 101 (YSVATQLFIGGVTGWCTGFIF) traverse the membrane as a helical segment. The Mitochondrial intermembrane portion of the chain corresponds to 102-107 (QNVGKL). The helical transmembrane segment at 108–128 (AATAVGGGFFLLQLANHTGYI) threads the bilayer. Residues 129 to 164 (KVDWQRVEKDMKKAKEQLKIRKSNQMPTEVRSKAEE) lie on the Cytoplasmic side of the membrane. The residue at position 151 (Ser-151) is a Phosphoserine. Residues 165-185 (VVSFVKKNVLVTGGFFGGFLL) form a helical membrane-spanning segment. Topologically, residues 186–189 (GMAS) are mitochondrial intermembrane.

This sequence belongs to the FUN14 family.

It is found in the mitochondrion outer membrane. The protein resides in the nucleus. Binds directly and specifically 1,2-Diacyl-sn-glycero-3-phospho-(1'-myo-inositol-3',4',5'-bisphosphate) (PIP3) leading to the recruitment of PIP3 to mitochondria and may play a role in the regulation of the platelet activation via AKT/GSK3B/cGMP signaling pathways. May act as transcription factor that regulates SREBP1 (isoform SREBP-1C) expression in order to modulate triglyceride (TG) homeostasis in hepatocytes. This Macaca mulatta (Rhesus macaque) protein is FUN14 domain-containing protein 2.